Reading from the N-terminus, the 186-residue chain is ADP-ribosylation factor-like protein 6 (186 aa).

A lipid anchor (N-myristoyl glycine) is attached at Gly-2. Residues 24–31 (GLDNSGKT), Thr-50, 69–73 (DMSGQ), Gly-72, 130–133 (NKMD), and Ala-164 contribute to the GTP site. Thr-50 provides a ligand contact to Mg(2+).

It belongs to the small GTPase superfamily. Arf family. Interacts with SEC61B, ARL6IP1, ARL6IP2, ARL6IP3, ARL6IP4 ARL6IP5 and ARL6IP6. Interacts (GTP-bound form) with the BBSome a complex that contains BBS1, BBS2, BBS4, BBS5, BBS7, BBS8/TTC8, BBS9 and BBIP10. Interacts (GTP-free form) with IFT27. Most abundant in brain and kidney. Expressed in heart and eye. Isoform 2 is expressed only in the retina.

The protein localises to the cell projection. It localises to the cilium membrane. Its subcellular location is the cytoplasm. It is found in the cytoskeleton. The protein resides in the cilium axoneme. The protein localises to the cilium basal body. Its function is as follows. Involved in membrane protein trafficking at the base of the ciliary organelle. Mediates recruitment onto plasma membrane of the BBSome complex which would constitute a coat complex required for sorting of specific membrane proteins to the primary cilia. Together with BBS1, is necessary for correct trafficking of PKD1 to primary cilia. Together with the BBSome complex and LTZL1, controls SMO ciliary trafficking and contributes to the sonic hedgehog (SHH) pathway regulation. May regulate cilia assembly and disassembly and subsequent ciliary signaling events such as the Wnt signaling cascade. Isoform 2 may be required for proper retinal function and organization. This is ADP-ribosylation factor-like protein 6 (Arl6) from Mus musculus (Mouse).